The sequence spans 356 residues: Glutamine synthetase cytosolic isozyme 1-1 (356 aa).

Ser2 carries the N-acetylserine modification. Residues Ser2 and Ser48 each carry the phosphoserine modification. Positions 19 to 99 constitute a GS beta-grasp domain; that stretch reads IIAEYIWVGG…VMCDAYTPAG (81 aa). The tract at residues 36 to 62 is disordered; that stretch reads KARTLPGPVTDPSQLPKWNYDGSSTGQ. Positions 106–356 constitute a GS catalytic domain; that stretch reads KRHAAAKVFS…IAETTILWNP (251 aa).

This sequence belongs to the glutamine synthetase family. As to quaternary structure, homooctamer. Interacts with CRK3 and GRF3. In terms of processing, phosphorylated by CRK3. As to expression, expressed in root tips, root hairs and epidermis. Ubiquitously expressed with higher levels in siliques and roots.

Its subcellular location is the cytoplasm. It carries out the reaction L-glutamate + NH4(+) + ATP = L-glutamine + ADP + phosphate + H(+). Its function is as follows. High-affinity glutamine synthetase which catalyzes the synthesis of glutamine from ammonium and glutamate. May contribute to the homeostatic control of glutamine synthesis in roots. In Arabidopsis thaliana (Mouse-ear cress), this protein is Glutamine synthetase cytosolic isozyme 1-1 (GLN1-1).